The sequence spans 348 residues: Protein RecA (348 aa).

G65–T72 contacts ATP.

The protein belongs to the RecA family.

Its subcellular location is the cytoplasm. Functionally, can catalyze the hydrolysis of ATP in the presence of single-stranded DNA, the ATP-dependent uptake of single-stranded DNA by duplex DNA, and the ATP-dependent hybridization of homologous single-stranded DNAs. It interacts with LexA causing its activation and leading to its autocatalytic cleavage. The protein is Protein RecA of Vibrio natriegens.